A 232-amino-acid chain; its full sequence is 6-phosphogluconolactonase (232 aa).

This sequence belongs to the glucosamine/galactosamine-6-phosphate isomerase family. 6-phosphogluconolactonase subfamily.

It carries out the reaction 6-phospho-D-glucono-1,5-lactone + H2O = 6-phospho-D-gluconate + H(+). The protein operates within carbohydrate degradation; pentose phosphate pathway; D-ribulose 5-phosphate from D-glucose 6-phosphate (oxidative stage): step 2/3. Functionally, hydrolysis of 6-phosphogluconolactone to 6-phosphogluconate. The protein is 6-phosphogluconolactonase (pgl) of Haemophilus influenzae (strain ATCC 51907 / DSM 11121 / KW20 / Rd).